We begin with the raw amino-acid sequence, 106 residues long: uncharacterized protein (106 aa).

The next 2 membrane-spanning stretches (helical) occupy residues 25 to 45 (VMNVVLNTLFSFVLAPYIHYI) and 62 to 82 (ICFLAKFSFLLVFLFYLNFQG).

Its subcellular location is the membrane. This is an uncharacterized protein from Saccharomyces cerevisiae (strain ATCC 204508 / S288c) (Baker's yeast).